Reading from the N-terminus, the 115-residue chain is NADH-ubiquinone oxidoreductase chain 3 (115 aa).

Helical transmembrane passes span 3–23 (LALALMINTLLALLLMTITFW), 55–75 (FFLVAITFLLFDLEIALLLPL), and 86–106 (LTIASSLTLITILILSLAYEW).

The protein belongs to the complex I subunit 3 family. Core subunit of respiratory chain NADH dehydrogenase (Complex I) which is composed of 45 different subunits. Interacts with TMEM186. Interacts with TMEM242.

Its subcellular location is the mitochondrion inner membrane. It carries out the reaction a ubiquinone + NADH + 5 H(+)(in) = a ubiquinol + NAD(+) + 4 H(+)(out). In terms of biological role, core subunit of the mitochondrial membrane respiratory chain NADH dehydrogenase (Complex I) which catalyzes electron transfer from NADH through the respiratory chain, using ubiquinone as an electron acceptor. Essential for the catalytic activity of complex I. This Hylobates lar (Lar gibbon) protein is NADH-ubiquinone oxidoreductase chain 3.